The following is a 365-amino-acid chain: tRNA(Met) cytidine acetate ligase (365 aa).

ATP is bound by residues 7-20 (IAEFNPFHNGHKYL), G96, N152, and R175.

Belongs to the TmcAL family.

It is found in the cytoplasm. It catalyses the reaction cytidine(34) in elongator tRNA(Met) + acetate + ATP = N(4)-acetylcytidine(34) in elongator tRNA(Met) + AMP + diphosphate. Catalyzes the formation of N(4)-acetylcytidine (ac(4)C) at the wobble position of elongator tRNA(Met), using acetate and ATP as substrates. First activates an acetate ion to form acetyladenylate (Ac-AMP) and then transfers the acetyl group to tRNA to form ac(4)C34. The polypeptide is tRNA(Met) cytidine acetate ligase (Streptococcus pneumoniae (strain P1031)).